We begin with the raw amino-acid sequence, 233 residues long: Superoxide dismutase [Mn] 3.3, mitochondrial (233 aa).

The transit peptide at 1 to 29 (MALRTLASKNALSFALGGAARPSAESARG) directs the protein to the mitochondrion. Mn(2+) contacts are provided by H57, H105, D194, and H198.

This sequence belongs to the iron/manganese superoxide dismutase family. In terms of assembly, homotetramer. Requires Mn(2+) as cofactor. As to expression, predominantly expressed in the embryo late in embryogenesis.

Its subcellular location is the mitochondrion matrix. The catalysed reaction is 2 superoxide + 2 H(+) = H2O2 + O2. In terms of biological role, destroys superoxide anion radicals which are normally produced within the cells and which are toxic to biological systems. This Zea mays (Maize) protein is Superoxide dismutase [Mn] 3.3, mitochondrial (SODA.2).